Consider the following 153-residue polypeptide: MSRRKARELALQALFQMDIAGTDPDTAVAQALTRETEPDWAPDRLEEESAEFARRLVRGAWQHREESDRLIAQYARGWRVERMAAVDRAILRMAVYEIVHSEDVPDSVAVAEAVELAKTFSTADSSRFVNGILGSVIRGMKGAAGADEAVSRD.

Belongs to the NusB family.

Functionally, involved in transcription antitermination. Required for transcription of ribosomal RNA (rRNA) genes. Binds specifically to the boxA antiterminator sequence of the ribosomal RNA (rrn) operons. The protein is Transcription antitermination protein NusB of Symbiobacterium thermophilum (strain DSM 24528 / JCM 14929 / IAM 14863 / T).